Consider the following 99-residue polypeptide: Nucleoid-associated protein EbfC (99 aa).

This sequence belongs to the YbaB/EbfC family. Homodimer.

The protein localises to the cytoplasm. It localises to the nucleoid. In terms of biological role, binds to DNA and alters its conformation. May be involved in regulation of gene expression, nucleoid organization and DNA protection. The sequence is that of Nucleoid-associated protein EbfC from Borreliella afzelii (strain PKo) (Borrelia afzelii).